Here is a 296-residue protein sequence, read N- to C-terminus: Sulfate adenylyltransferase subunit 2 (296 aa).

Belongs to the PAPS reductase family. CysD subfamily. As to quaternary structure, heterodimer composed of CysD, the smaller subunit, and CysN.

The catalysed reaction is sulfate + ATP + H(+) = adenosine 5'-phosphosulfate + diphosphate. The protein operates within sulfur metabolism; hydrogen sulfide biosynthesis; sulfite from sulfate: step 1/3. Its function is as follows. With CysN forms the ATP sulfurylase (ATPS) that catalyzes the adenylation of sulfate producing adenosine 5'-phosphosulfate (APS) and diphosphate, the first enzymatic step in sulfur assimilation pathway. APS synthesis involves the formation of a high-energy phosphoric-sulfuric acid anhydride bond driven by GTP hydrolysis by CysN coupled to ATP hydrolysis by CysD. This chain is Sulfate adenylyltransferase subunit 2, found in Rhodospirillum rubrum (strain ATCC 11170 / ATH 1.1.1 / DSM 467 / LMG 4362 / NCIMB 8255 / S1).